Here is an 809-residue protein sequence, read N- to C-terminus: Lon protease (809 aa).

The region spanning 20-216 (LPLLALRDVV…ELMNYLMNQS (197 aa)) is the Lon N-terminal domain. 369–376 (GPPGVGKT) lines the ATP pocket. The 182-residue stretch at 606 to 787 (EAQVGRVNGL…DEILPLALTS (182 aa)) folds into the Lon proteolytic domain. Catalysis depends on residues Ser693 and Lys736.

The protein belongs to the peptidase S16 family. Homohexamer. Organized in a ring with a central cavity.

Its subcellular location is the cytoplasm. The enzyme catalyses Hydrolysis of proteins in presence of ATP.. In terms of biological role, ATP-dependent serine protease that mediates the selective degradation of mutant and abnormal proteins as well as certain short-lived regulatory proteins. Required for cellular homeostasis and for survival from DNA damage and developmental changes induced by stress. Degrades polypeptides processively to yield small peptide fragments that are 5 to 10 amino acids long. Binds to DNA in a double-stranded, site-specific manner. The polypeptide is Lon protease (Acinetobacter baumannii (strain AB307-0294)).